We begin with the raw amino-acid sequence, 204 residues long: CASP-like protein 4B4 (204 aa).

Topologically, residues 1-60 (MSAAVAASSGAPAADVEKGAAAADANVDGGGAPAAAAASGEGVVSAVVRRWRRQDLLEKS) are cytoplasmic. A helical membrane pass occupies residues 61 to 81 (GSALRVAAWAFSLLAFVVMGA). The Extracellular portion of the chain corresponds to 82 to 98 (NDHGDWRQFEHYEEYRY). The helical transmembrane segment at 99–119 (VVAIGVLAFIYTTLQLVRHGV) threads the bilayer. The Cytoplasmic portion of the chain corresponds to 120-130 (RLTGGQDLQGK). A helical membrane pass occupies residues 131–151 (VAVLVDFAGDQVTAYLLMSAV). Over 152-175 (SAAIPITNRMREGADNVFTDSSAA) the chain is Extracellular. Residues 176–196 (SISMAFFAFLCLALSALVSGF) form a helical membrane-spanning segment. Over 197–204 (KLAKQTYI) the chain is Cytoplasmic.

This sequence belongs to the Casparian strip membrane proteins (CASP) family. Homodimer and heterodimers.

It is found in the cell membrane. The protein is CASP-like protein 4B4 of Oryza sativa subsp. japonica (Rice).